Consider the following 211-residue polypeptide: HTH-type transcriptional repressor FabR (211 aa).

Positions 10 to 70 (RTRRSLIEAA…TMVDESGLML (61 aa)) constitute an HTH tetR-type domain. The segment at residues 33-52 (SLREVSREAGIAPTSFYRHF) is a DNA-binding region (H-T-H motif).

In terms of assembly, homodimer.

Its subcellular location is the cytoplasm. Represses the transcription of fabB, involved in unsaturated fatty acid (UFA) biosynthesis. By controlling UFA production, FabR directly influences the physical properties of the membrane bilayer. The sequence is that of HTH-type transcriptional repressor FabR from Yersinia pseudotuberculosis serotype O:1b (strain IP 31758).